Reading from the N-terminus, the 312-residue chain is Very-long-chain 3-oxoacyl-CoA reductase (312 aa).

The helical transmembrane segment at 4–24 (ALPAAGFLYWVGAGTVAYLAL) threads the bilayer. 50–79 (GEWAVVTGSTDGIGKSYAEELAKHGMKVVL) contributes to the NADP(+) binding site. The next 2 helical transmembrane spans lie at 182–202 (GAIL…LTIY) and 271–291 (GYLI…WIYL). A substrate-binding site is contributed by S189. Y202 acts as the Proton acceptor in catalysis. The Di-lysine motif motif lies at 308–312 (KTKKN).

It belongs to the short-chain dehydrogenases/reductases (SDR) family. 17-beta-HSD 3 subfamily. In terms of assembly, interacts with ELOVL1 and LASS2. In terms of tissue distribution, expressed in most tissues tested. Highly expressed in the ovary and mammary. Expressed in platelets.

It localises to the endoplasmic reticulum membrane. It carries out the reaction a very-long-chain (3R)-3-hydroxyacyl-CoA + NADP(+) = a very-long-chain 3-oxoacyl-CoA + NADPH + H(+). It catalyses the reaction 17beta-estradiol + NAD(+) = estrone + NADH + H(+). The catalysed reaction is 17beta-estradiol + NADP(+) = estrone + NADPH + H(+). The enzyme catalyses 3-oxooctadecanoyl-CoA + NADPH + H(+) = (3R)-hydroxyoctadecanoyl-CoA + NADP(+). It carries out the reaction (7Z,10Z,13Z,16Z)-3-oxodocosatetraenoyl-CoA + NADPH + H(+) = (3R)-hydroxy-(7Z,10Z,13Z,16Z)-docosatetraenoyl-CoA + NADP(+). It catalyses the reaction 3-oxo-(7Z,10Z,13Z,16Z,19Z)-docosapentaenoyl-CoA + NADPH + H(+) = (3R)-hydroxy-(7Z,10Z,13Z,16Z,19Z)-docosapentaenoyl-CoA + NADP(+). The catalysed reaction is (8Z,11Z,14Z)-3-oxoeicosatrienoyl-CoA + NADPH + H(+) = (3R)-hydroxy-(8Z,11Z,14Z)-eicosatrienoyl-CoA + NADP(+). The protein operates within lipid metabolism; fatty acid biosynthesis. Its pathway is steroid biosynthesis; estrogen biosynthesis. Functionally, catalyzes the second of the four reactions of the long-chain fatty acids elongation cycle. This endoplasmic reticulum-bound enzymatic process, allows the addition of two carbons to the chain of long- and very long-chain fatty acids/VLCFAs per cycle. This enzyme has a 3-ketoacyl-CoA reductase activity, reducing 3-ketoacyl-CoA to 3-hydroxyacyl-CoA, within each cycle of fatty acid elongation. Thereby, it may participate in the production of VLCFAs of different chain lengths that are involved in multiple biological processes as precursors of membrane lipids and lipid mediators. May also catalyze the transformation of estrone (E1) into estradiol (E2) and play a role in estrogen formation. The polypeptide is Very-long-chain 3-oxoacyl-CoA reductase (Homo sapiens (Human)).